Here is a 199-residue protein sequence, read N- to C-terminus: MLKKVVYCGVCSLPPEYCEFTGKIRRCKVWLHEHDQELFAQLYGDDKEDVDGVAARLGQSSIGEEREEQLEKKLQKLQAREESKEQRELARKLSSRVVIRREARTKRKCMVVVAGLEVFEIDMKKLAKTFASKFATGCSVSKNVEKKEEVVVQGDIADEVEAYIHALLEEKGMKGVKVEQIDAAKKKKKTPTTTTPPPS.

In terms of domain architecture, SUI1 spans 97 to 168 (VVIRREARTK…EVEAYIHALL (72 aa)).

The protein belongs to the DENR family. As to quaternary structure, interacts with the 40S ribosomal subunit.

It is found in the cytoplasm. The protein is Translation machinery-associated protein 22 (TMA22) of Eremothecium gossypii (strain ATCC 10895 / CBS 109.51 / FGSC 9923 / NRRL Y-1056) (Yeast).